The chain runs to 199 residues: ATP-dependent Clp protease proteolytic subunit (199 aa).

Catalysis depends on Ser-97, which acts as the Nucleophile. His-122 is a catalytic residue.

This sequence belongs to the peptidase S14 family. As to quaternary structure, fourteen ClpP subunits assemble into 2 heptameric rings which stack back to back to give a disk-like structure with a central cavity, resembling the structure of eukaryotic proteasomes.

It is found in the cytoplasm. The catalysed reaction is Hydrolysis of proteins to small peptides in the presence of ATP and magnesium. alpha-casein is the usual test substrate. In the absence of ATP, only oligopeptides shorter than five residues are hydrolyzed (such as succinyl-Leu-Tyr-|-NHMec, and Leu-Tyr-Leu-|-Tyr-Trp, in which cleavage of the -Tyr-|-Leu- and -Tyr-|-Trp bonds also occurs).. In terms of biological role, cleaves peptides in various proteins in a process that requires ATP hydrolysis. Has a chymotrypsin-like activity. Plays a major role in the degradation of misfolded proteins. This is ATP-dependent Clp protease proteolytic subunit from Geobacter sulfurreducens (strain ATCC 51573 / DSM 12127 / PCA).